The following is a 634-amino-acid chain: DNA gyrase subunit B (634 aa).

Positions 416–530 (REIYIVEGDS…NGYIYIAMPP (115 aa)) constitute a Toprim domain. Mg(2+) contacts are provided by glutamate 422, aspartate 495, and aspartate 497.

This sequence belongs to the type II topoisomerase GyrB family. As to quaternary structure, heterotetramer, composed of two GyrA and two GyrB chains. In the heterotetramer, GyrA contains the active site tyrosine that forms a transient covalent intermediate with DNA, while GyrB binds cofactors and catalyzes ATP hydrolysis. Requires Mg(2+) as cofactor. Mn(2+) serves as cofactor. It depends on Ca(2+) as a cofactor.

Its subcellular location is the cytoplasm. It carries out the reaction ATP-dependent breakage, passage and rejoining of double-stranded DNA.. Its function is as follows. A type II topoisomerase that negatively supercoils closed circular double-stranded (ds) DNA in an ATP-dependent manner to modulate DNA topology and maintain chromosomes in an underwound state. Negative supercoiling favors strand separation, and DNA replication, transcription, recombination and repair, all of which involve strand separation. Also able to catalyze the interconversion of other topological isomers of dsDNA rings, including catenanes and knotted rings. Type II topoisomerases break and join 2 DNA strands simultaneously in an ATP-dependent manner. The protein is DNA gyrase subunit B of Borreliella burgdorferi (strain ATCC 35210 / DSM 4680 / CIP 102532 / B31) (Borrelia burgdorferi).